The sequence spans 339 residues: Serpentine receptor class delta-32 (339 aa).

The next 7 membrane-spanning stretches (helical) occupy residues 14 to 34 (AAVV…LIFF), 45 to 65 (VFLA…LLTV), 94 to 114 (IFTT…LSMV), 128 to 148 (SGAF…VVSI), 188 to 208 (LWVA…MFWC), 237 to 257 (ALTV…LIFL), and 269 to 289 (FGYI…LVTI).

It belongs to the nematode receptor-like protein srd family.

It localises to the membrane. This Caenorhabditis elegans protein is Serpentine receptor class delta-32 (srd-32).